A 1906-amino-acid chain; its full sequence is DENN domain-containing protein 4C (1906 aa).

The 160-residue stretch at 40–199 (KAPITDIAVI…NVFLCYKKSV (160 aa)) folds into the MABP domain. The uDENN domain occupies 191-363 (VFLCYKKSVP…NIPFPSPQRP (173 aa)). The region spanning 384–520 (PLPLSGANFS…PCKSLLGTLR (137 aa)) is the cDENN domain. Residues 522-640 (LYQQLCSVHR…CSFVSDKDTG (119 aa)) form the dDENN domain. S702, S736, and S740 each carry phosphoserine. The stretch at 818-852 (DEVCYRVVMQLCGLWVNPVLAVRVLFEMKTARIKP) is one PPR repeat. Over residues 904–917 (SQVFSISGGQSDQG) the composition is skewed to polar residues. Disordered regions lie at residues 904–942 (SQVF…PPEL) and 963–984 (LQPT…SIVK). Positions 920–939 (SKDELVKEGADGHAPEEHTP) are enriched in basic and acidic residues. T966 is subject to Phosphothreonine. Residues 966 to 975 (TPEPQSPTEP) show a composition bias toward pro residues. A Phosphoserine modification is found at S971. T973 is subject to Phosphothreonine. A phosphoserine mark is found at S987, S1000, S1043, S1058, S1096, and S1123. Positions 1154–1171 (NSLQSNSHSDQSRDTQAG) are enriched in polar residues. The segment at 1154–1184 (NSLQSNSHSDQSRDTQAGAQDPVNKRSSSYA) is disordered. Phosphoserine occurs at positions 1181, 1221, 1240, 1248, and 1274. Residues 1246–1317 (SCSMELHGEG…PQSPYRAYKD (72 aa)) form a disordered region. Positions 1281 to 1291 (PPARDSTETEK) are enriched in basic and acidic residues. The span at 1292 to 1302 (SSPAVSSSKTL) shows a compositional bias: polar residues. Phosphoserine is present on residues S1321, S1333, and S1342. Disordered stretches follow at residues 1410–1440 (SPNT…GDVG), 1548–1577 (STSG…SAEP), and 1596–1628 (ASYT…LSKR). A compositionally biased stretch (low complexity) spans 1423-1437 (LTQSNTSLGSSSSSG). Composition is skewed to polar residues over residues 1548–1564 (STSG…SASE) and 1611–1628 (GDVQ…LSKR). A phosphoserine mark is found at S1620, S1624, S1626, S1637, and S1796.

In terms of processing, phosphorylated in response to insulin.

The protein resides in the cytoplasmic vesicle membrane. It is found in the cell membrane. It localises to the cytoplasm. The protein localises to the cytosol. Functionally, guanine nucleotide exchange factor (GEF) activating RAB10. Promotes the exchange of GDP to GTP, converting inactive GDP-bound RAB10 into its active GTP-bound form. Thereby, stimulates SLC2A4/GLUT4 glucose transporter-enriched vesicles delivery to the plasma membrane in response to insulin. The polypeptide is DENN domain-containing protein 4C (Dennd4c) (Mus musculus (Mouse)).